Consider the following 391-residue polypeptide: Processive diacylglycerol beta-glucosyltransferase (391 aa).

Belongs to the glycosyltransferase 28 family. UgtP subfamily.

The protein localises to the cell membrane. It carries out the reaction a 1,2-diacyl-3-O-(beta-D-glucopyranosyl)-sn-glycerol + UDP-alpha-D-glucose = a 1,2-diacyl-3-O-(beta-D-Glc-(1-&gt;6)-beta-D-Glc)-sn-glycerol + UDP + H(+). The catalysed reaction is a 1,2-diacyl-sn-glycerol + UDP-alpha-D-glucose = a 1,2-diacyl-3-O-(beta-D-glucopyranosyl)-sn-glycerol + UDP + H(+). The protein operates within glycolipid metabolism; diglucosyl-diacylglycerol biosynthesis. Functionally, processive glucosyltransferase involved in the biosynthesis of both the bilayer- and non-bilayer-forming membrane glucolipids. Is able to successively transfer two glucosyl residues to diacylglycerol (DAG), thereby catalyzing the formation of beta-monoglucosyl-DAG (3-O-(beta-D-glucopyranosyl)-1,2-diacyl-sn-glycerol) and beta-diglucosyl-DAG (3-O-(beta-D-glucopyranosyl-beta-(1-&gt;6)-D-glucopyranosyl)-1,2-diacyl-sn-glycerol). Beta-diglucosyl-DAG is the predominant glycolipid found in Bacillales and is also used as a membrane anchor for lipoteichoic acid (LTA). This is Processive diacylglycerol beta-glucosyltransferase from Staphylococcus saprophyticus subsp. saprophyticus (strain ATCC 15305 / DSM 20229 / NCIMB 8711 / NCTC 7292 / S-41).